We begin with the raw amino-acid sequence, 396 residues long: MKRHLKACLWVLCFASTALSSLADTTSPKPTLASAFSGKSKTTAVSTALKANKTASELLPMVINTWNFTAANVLAWRILKQSKGGLRQTRNAVVEGCSKCEKLQCDRTVGYGGSPDELGETTLDAMVMDGATMEVGAVAGLRRIKDAIKVARHVLEHTQHTMLVGDAASAFANAMGFESESLVTPESKDMWLQWTAENCQPNFWKNVHPDPKVSCGPYKPRPTPLTRWKEDRARNEYEIGRKNHDTIGMIAIDVESNIHAGTSTNGARHKIPGRVGDSPIPGAGAYADNEVGAAVATGDGDVMMRFLPSLLAVEAMRAGKPPADAAEESLRRIIRHHKDFMGALIAVDRLGRYGAACYGLDEFPFMVSSPAGRDGPTRLETVKCIAGQDKVNIVSF.

An N-terminal signal peptide occupies residues 1 to 23 (MKRHLKACLWVLCFASTALSSLA). 2 disulfide bridges follow: Cys100–Cys105 and Cys199–Cys215. Thr246 (nucleophile) is an active-site residue. Substrate-binding positions include 274–277 (RVGD) and 297–300 (TGDG). Cys357 and Cys384 are disulfide-bonded.

Belongs to the Ntn-hydrolase family. In terms of assembly, heterotetramer of two alpha and two beta chains arranged as a dimer of alpha/beta heterodimers. In terms of processing, cleaved into an alpha and beta chain by autocatalysis; this activates the enzyme. The N-terminal residue of the beta subunit is responsible for the nucleophile hydrolase activity.

It catalyses the reaction N(4)-(beta-N-acetyl-D-glucosaminyl)-L-asparagine + H2O = N-acetyl-beta-D-glucosaminylamine + L-aspartate + H(+). In terms of biological role, cleaves the GlcNAc-Asn bond which joins oligosaccharides to the peptide of asparagine-linked glycoproteins. The sequence is that of Putative N(4)-(beta-N-acetylglucosaminyl)-L-asparaginase GE19290 from Drosophila yakuba (Fruit fly).